The chain runs to 359 residues: Peptide chain release factor 1 (359 aa).

Gln235 bears the N5-methylglutamine mark. Positions 283-294 (SKADEERSESRK) are enriched in basic and acidic residues. The tract at residues 283–309 (SKADEERSESRKSQVGSGDRSERIRTY) is disordered.

Belongs to the prokaryotic/mitochondrial release factor family. Post-translationally, methylated by PrmC. Methylation increases the termination efficiency of RF1.

The protein localises to the cytoplasm. Functionally, peptide chain release factor 1 directs the termination of translation in response to the peptide chain termination codons UAG and UAA. The polypeptide is Peptide chain release factor 1 (Mesorhizobium japonicum (strain LMG 29417 / CECT 9101 / MAFF 303099) (Mesorhizobium loti (strain MAFF 303099))).